The following is an 821-amino-acid chain: Spindle apparatus protein lin-5 (821 aa).

A disordered region spans residues 161 to 199 (EASSGFRTPKRNNYSLTSLQTPTATARRLRTASSTARRS). Over residues 162–180 (ASSGFRTPKRNNYSLTSLQ) the composition is skewed to polar residues. The segment covering 181-199 (TPTATARRLRTASSTARRS) has biased composition (low complexity). Positions 211 to 634 (KFMRSERELK…REKESAEIKK (424 aa)) form a coiled coil. Disordered regions lie at residues 736 to 758 (RSES…FTPS) and 779 to 821 (LKCS…SKKQ).

As to quaternary structure, interacts with gpr-1; gpr-1 forms a complex with gpr-2 and GDP-bound goa-1.

It localises to the cytoplasm. It is found in the cell cortex. The protein resides in the cytoskeleton. The protein localises to the spindle. Its subcellular location is the chromosome. It localises to the centromere. It is found in the kinetochore. The protein resides in the microtubule organizing center. The protein localises to the centrosome. Essential component of the spindle apparatus required for spindle positioning and chromosome movement. Acts to recruit or anchor gpr-1/gpr-2 complex to the spindle and cortex. Also involved, directly or indirectly, in cytokinesis and in the coupling of DNA replication, centrosome duplication and mitotic division. The sequence is that of Spindle apparatus protein lin-5 (lin-5) from Caenorhabditis elegans.